Here is a 101-residue protein sequence, read N- to C-terminus: Small ribosomal subunit protein uS14 (101 aa).

Belongs to the universal ribosomal protein uS14 family. As to quaternary structure, part of the 30S ribosomal subunit. Contacts proteins S3 and S10.

Functionally, binds 16S rRNA, required for the assembly of 30S particles and may also be responsible for determining the conformation of the 16S rRNA at the A site. In Anaplasma phagocytophilum (strain HZ), this protein is Small ribosomal subunit protein uS14.